A 369-amino-acid chain; its full sequence is Phenylalanine--tRNA ligase alpha subunit (369 aa).

Glu-269 contributes to the Mg(2+) binding site.

Belongs to the class-II aminoacyl-tRNA synthetase family. Phe-tRNA synthetase alpha subunit type 1 subfamily. As to quaternary structure, tetramer of two alpha and two beta subunits. It depends on Mg(2+) as a cofactor.

It localises to the cytoplasm. It carries out the reaction tRNA(Phe) + L-phenylalanine + ATP = L-phenylalanyl-tRNA(Phe) + AMP + diphosphate + H(+). The polypeptide is Phenylalanine--tRNA ligase alpha subunit (Nitrobacter winogradskyi (strain ATCC 25391 / DSM 10237 / CIP 104748 / NCIMB 11846 / Nb-255)).